A 644-amino-acid polypeptide reads, in one-letter code: Tripeptidyl-peptidase sed1 (644 aa).

Positions 1–18 are cleaved as a signal peptide; that stretch reads MRLSHVLLGTAAAAGVLA. Residues 19 to 196 constitute a propeptide, removed in mature form; that stretch reads SPTPNDYVVH…KARSIEKRSF (178 aa). In terms of domain architecture, Peptidase S53 spans 224-643; sequence AITPLCISAL…PALLDLFMSL (420 aa). Asn235 is a glycosylation site (N-linked (GlcNAc...) asparagine). Catalysis depends on charge relay system residues Glu300 and Asp304. N-linked (GlcNAc...) asparagine glycans are attached at residues Asn326, Asn332, and Asn519. Ser561 (charge relay system) is an active-site residue. The Ca(2+) site is built by Asp602, Ile603, Gly621, and Asp623.

Ca(2+) is required as a cofactor. Post-translationally, N-glycosylated.

The protein resides in the secreted. It is found in the extracellular space. The catalysed reaction is Release of an N-terminal tripeptide from a polypeptide.. Functionally, secreted tripeptidyl-peptidase which degrades proteins at acidic pHs and is involved in virulence. This is Tripeptidyl-peptidase sed1 (sed1) from Aspergillus fumigatus (strain ATCC MYA-4609 / CBS 101355 / FGSC A1100 / Af293) (Neosartorya fumigata).